A 235-amino-acid chain; its full sequence is Chalcone--flavanone isomerase 1 (235 aa).

Substrate is bound by residues Thr-50 and Ser-192.

It belongs to the chalcone isomerase family.

The enzyme catalyses a chalcone = a flavanone.. Its pathway is secondary metabolite biosynthesis; flavonoid biosynthesis. Catalyzes the intramolecular cyclization of bicyclic chalcones into tricyclic (S)-flavanones. Responsible for the isomerization of 4,2',4',6'-tetrahydroxychalcone (also termed chalcone) into naringenin. The polypeptide is Chalcone--flavanone isomerase 1 (CHI1) (Chrysanthemum morifolium (Florist's daisy)).